The chain runs to 332 residues: Biotin synthase (332 aa).

The Radical SAM core domain occupies 51-278 (RTIQLSTLMS…KSYVRLSAGR (228 aa)). Residues C66, C70, and C73 each contribute to the [4Fe-4S] cluster site. C110, C141, C201, and R273 together coordinate [2Fe-2S] cluster.

Belongs to the radical SAM superfamily. Biotin synthase family. In terms of assembly, homodimer. Requires [4Fe-4S] cluster as cofactor. [2Fe-2S] cluster serves as cofactor.

The catalysed reaction is (4R,5S)-dethiobiotin + (sulfur carrier)-SH + 2 reduced [2Fe-2S]-[ferredoxin] + 2 S-adenosyl-L-methionine = (sulfur carrier)-H + biotin + 2 5'-deoxyadenosine + 2 L-methionine + 2 oxidized [2Fe-2S]-[ferredoxin]. It functions in the pathway cofactor biosynthesis; biotin biosynthesis; biotin from 7,8-diaminononanoate: step 2/2. Its function is as follows. Catalyzes the conversion of dethiobiotin (DTB) to biotin by the insertion of a sulfur atom into dethiobiotin via a radical-based mechanism. The polypeptide is Biotin synthase (Haemophilus influenzae (strain PittGG)).